Here is a 162-residue protein sequence, read N- to C-terminus: Ribosome maturation factor RimM (162 aa).

The PRC barrel domain maps to 90-161; it reads EDCYYEADIV…KIIIKPLEVW (72 aa).

It belongs to the RimM family. As to quaternary structure, binds ribosomal protein uS19.

It is found in the cytoplasm. Its function is as follows. An accessory protein needed during the final step in the assembly of 30S ribosomal subunit, possibly for assembly of the head region. Essential for efficient processing of 16S rRNA. May be needed both before and after RbfA during the maturation of 16S rRNA. It has affinity for free ribosomal 30S subunits but not for 70S ribosomes. The sequence is that of Ribosome maturation factor RimM from Clostridium novyi (strain NT).